We begin with the raw amino-acid sequence, 252 residues long: Imidazole glycerol phosphate synthase subunit HisF (252 aa).

Catalysis depends on residues Asp11 and Asp130.

This sequence belongs to the HisA/HisF family. As to quaternary structure, heterodimer of HisH and HisF.

The protein resides in the cytoplasm. It catalyses the reaction 5-[(5-phospho-1-deoxy-D-ribulos-1-ylimino)methylamino]-1-(5-phospho-beta-D-ribosyl)imidazole-4-carboxamide + L-glutamine = D-erythro-1-(imidazol-4-yl)glycerol 3-phosphate + 5-amino-1-(5-phospho-beta-D-ribosyl)imidazole-4-carboxamide + L-glutamate + H(+). The protein operates within amino-acid biosynthesis; L-histidine biosynthesis; L-histidine from 5-phospho-alpha-D-ribose 1-diphosphate: step 5/9. Its function is as follows. IGPS catalyzes the conversion of PRFAR and glutamine to IGP, AICAR and glutamate. The HisF subunit catalyzes the cyclization activity that produces IGP and AICAR from PRFAR using the ammonia provided by the HisH subunit. This chain is Imidazole glycerol phosphate synthase subunit HisF, found in Geobacillus thermodenitrificans (strain NG80-2).